The primary structure comprises 468 residues: SVGFKAGVKDYKLNYYTPQYQTKDTDILAAFRVTPQPGVPPEERGAAVAAESSTGTWTTVWTDGLTSLDRYKGRCYHIEPVVGEEDQYIAYVAYPLDLFEEGSVTNMFTSIVGNVFGFKALRALRLEDLRIPTSYIKTFQGPPHGIQVERDKLNKYGRPLLGCTIKPKLGLSAKNYGRAVYECLRGGLDFTKDDENVNSQPFMRWRDRFLFCAEALYKAQAETGEIKGHYLNATAGTCEEMIKRAVFARELGVPIVMHDYLTGGFTANTTLAHYCRDNGLLLHIHRAMHAVIDRQKNHGMHFRVLAKALRLSGGDHVHAGTVVGKLEGERDITLGFVDLLRDDFIEKDRSRGIYFTQDWVSLPGVIPVASGGIHVWHMPALTEIFGDDAVLQFGGGTLGHPWGNAPGAVANRVALEACVKARNEGRDLAVEGNEIIREASKWSPELAAACEVWKEIRFNFAAVDTLDP.

N6,N6,N6-trimethyllysine is present on Lys-5. Residues Asn-114 and Thr-164 each coordinate substrate. The Proton acceptor role is filled by Lys-166. Lys-168 is a substrate binding site. Positions 192, 194, and 195 each coordinate Mg(2+). At Lys-192 the chain carries N6-carboxylysine. His-285 (proton acceptor) is an active-site residue. Residues Arg-286, His-318, and Ser-370 each coordinate substrate.

The protein belongs to the RuBisCO large chain family. Type I subfamily. As to quaternary structure, heterohexadecamer of 8 large chains and 8 small chains; disulfide-linked. The disulfide link is formed within the large subunit homodimers. Mg(2+) serves as cofactor. In terms of processing, the disulfide bond which can form in the large chain dimeric partners within the hexadecamer appears to be associated with oxidative stress and protein turnover.

It localises to the plastid. The protein resides in the chloroplast. The catalysed reaction is 2 (2R)-3-phosphoglycerate + 2 H(+) = D-ribulose 1,5-bisphosphate + CO2 + H2O. It catalyses the reaction D-ribulose 1,5-bisphosphate + O2 = 2-phosphoglycolate + (2R)-3-phosphoglycerate + 2 H(+). Functionally, ruBisCO catalyzes two reactions: the carboxylation of D-ribulose 1,5-bisphosphate, the primary event in carbon dioxide fixation, as well as the oxidative fragmentation of the pentose substrate in the photorespiration process. Both reactions occur simultaneously and in competition at the same active site. In Catesbaea spinosa, this protein is Ribulose bisphosphate carboxylase large chain.